We begin with the raw amino-acid sequence, 614 residues long: MLCLGWVFLWFVAGEKTTGFNHSACATKKLLWTYSARGAENFVLFCDLQELQEQKFSHASQLSPTQSPAHKPCSGSQKDLSDVQWYMQPRSGSPLEEISRNSPHMQSEGMLHILAPQTNSIWSYICRPRIRSPQDMACCIKTVLEVKPQRNVSCGNTAQDEQVLLLGSTGSIHCPSLSCQSDVQSPEMTWYKDGRLLPEHKKNPIEMADIYVFNQGLYVCDYTQSDNVSSWTVRAVVKVRTIGKDINVKPEILDPITDTLDVELGKPLTLPCRVQFGFQRLSKPVIKWYVKESTQEWEMSVFEEKRIQSTFKNEVIERTIFLREVTQRDLSRKFVCFAQNSIGNTTRTIRLRKKEEVVFVYILLGTALMLVGVLVAAAFLYWYWIEVVLLCRTYKNKDETLGDKKEFDAFVSYSNWSSPETDAVGSLSEEHLALNLFPEVLEDTYGYRLCLLDRDVTPGGVYADDIVSIIKKSRRGIFILSPSYLNGPRVFELQAAVNLALVDQTLKLILIKFCSFQEPESLPYLVKKALRVLPTVTWKGLKSVHASSRFWTQIRYHMPVKNSNRFMFNGLRIFLKGFSPEKDLVTQKPLEGMPKSGNDHGAQNLLLYSDQKRC.

A signal peptide spans 1 to 19; the sequence is MLCLGWVFLWFVAGEKTTG. Residues 20–356 lie on the Extracellular side of the membrane; the sequence is FNHSACATKK…RTIRLRKKEE (337 aa). The N-linked (GlcNAc...) asparagine glycan is linked to asparagine 21. Cysteine 46 and cysteine 126 are joined by a disulfide. Residues 59–78 form a disordered region; sequence ASQLSPTQSPAHKPCSGSQK. 2 Ig-like C2-type domains span residues 148-234 and 250-352; these read PQRN…WTVR and PEIL…IRLR. The N-linked (GlcNAc...) asparagine glycan is linked to asparagine 151. Disulfide bonds link cysteine 154-cysteine 179, cysteine 174-cysteine 220, and cysteine 179-cysteine 220. Asparagine 227 is a glycosylation site (N-linked (GlcNAc...) asparagine). A disulfide bridge links cysteine 272 with cysteine 336. N-linked (GlcNAc...) asparagine glycosylation is present at asparagine 344. Residues 357–377 form a helical membrane-spanning segment; the sequence is VVFVYILLGTALMLVGVLVAA. The Cytoplasmic segment spans residues 378 to 614; that stretch reads AFLYWYWIEV…LLLYSDQKRC (237 aa). Positions 405-558 constitute a TIR domain; the sequence is KEFDAFVSYS…RFWTQIRYHM (154 aa). Residue glutamate 492 is part of the active site.

Belongs to the interleukin-1 receptor family. In terms of assembly, forms a ternary complex with IL18 and IL18R1. Within this complex, IL18R1 is involved in ligand-binding and IL18RAP in signaling leading to NF-kappa-B and JNK activation.

Its subcellular location is the cell membrane. The enzyme catalyses NAD(+) + H2O = ADP-D-ribose + nicotinamide + H(+). Its function is as follows. Within the IL18 receptor complex, does not mediate IL18-binding, but involved in IL18-dependent signal transduction, leading to NF-kappa-B and JNK activation. May play a role in IL18-mediated IFNG synthesis from T-helper 1 (Th1) cells. The sequence is that of Interleukin-18 receptor accessory protein from Mus musculus (Mouse).